The primary structure comprises 438 residues: Adenylosuccinate synthetase (438 aa).

GTP contacts are provided by residues 13-19 and 41-43; these read GDEGKGK and GHT. The active-site Proton acceptor is the D14. 2 residues coordinate Mg(2+): D14 and G41. Residues 14-17, 39-42, T130, R144, Q225, T240, and R312 each bind IMP; these read DEGK and NAGH. H42 (proton donor) is an active-site residue. Residue 308-314 participates in substrate binding; sequence ATTGRQR. GTP is bound by residues R314, 340-342, and 422-424; these read KLD and STG.

This sequence belongs to the adenylosuccinate synthetase family. In terms of assembly, homodimer. Mg(2+) is required as a cofactor.

The protein localises to the cytoplasm. The catalysed reaction is IMP + L-aspartate + GTP = N(6)-(1,2-dicarboxyethyl)-AMP + GDP + phosphate + 2 H(+). It functions in the pathway purine metabolism; AMP biosynthesis via de novo pathway; AMP from IMP: step 1/2. Plays an important role in the de novo pathway of purine nucleotide biosynthesis. Catalyzes the first committed step in the biosynthesis of AMP from IMP. The chain is Adenylosuccinate synthetase from Vesicomyosocius okutanii subsp. Calyptogena okutanii (strain HA).